A 275-amino-acid polypeptide reads, in one-letter code: MASLQTQMISFYLIFLSILLTTIFFFKVNSTETTSFSITKFSPDQQNLIFQGDGYTTKGKLTLTKAVKSTVGRALYSTPIHIWDRDTGNVANFVTSFTFVIDAPSSYNVADGFTFFIAPVDTKPQTGGGYLGVFNSKEYDKTSQTVAVEFDTFYNAAWDPSNKERHIGIDVNSIKSVSTKSWNLQNGERANVVIAFNAATNVLTVTLTYPNSLEEENVTSYTLNEVVPLKDVVPEWVRIGFSATTGAEFAAHEVHSWSFHSELGGTSSSKQAADA.

A signal peptide spans 1-30 (MASLQTQMISFYLIFLSILLTTIFFFKVNS). Positions 111 and 129 each coordinate D-glucose. The Mn(2+) site is built by Glu-149 and Asp-151. Positions 151, 153, 155, and 159 each coordinate Ca(2+). The Mn(2+) site is built by Asp-159 and His-166. Residues 211-217 (NSLEEEN) constitute a propeptide that is removed on maturation. D-glucose-binding residues include Gly-246 and Ala-247. The propeptide occupies 270 to 275 (KQAADA).

It belongs to the leguminous lectin family. Heterotetramer of two alpha and two beta chains. In terms of processing, the mature form consists of two chains, alpha and beta, produced by cleavage of the immature protein. These remain cleaved, yet fold together to form one subunit.

D-mannose specific lectin. This is Lectin from Lens culinaris subsp. orientalis (Oriental wild lentil).